Consider the following 315-residue polypeptide: uncharacterized protein (315 aa).

Helical transmembrane passes span 18-38 (IWFIIFYLFVIQALGSAIISG), 202-222 (ILAIAMFIVIWPVTMGILAGI), and 244-264 (LIYAVVIAFVCTPVAIIVIVL). The tract at residues 288–315 (VCSTGNRSSGSTDQDISTTKQQSQEAVA) is disordered.

It localises to the membrane. This is an uncharacterized protein from Saccharomyces cerevisiae (strain ATCC 204508 / S288c) (Baker's yeast).